A 341-amino-acid polypeptide reads, in one-letter code: Heat-inducible transcription repressor HrcA (341 aa).

The protein belongs to the HrcA family.

Negative regulator of class I heat shock genes (grpE-dnaK-dnaJ and groELS operons). Prevents heat-shock induction of these operons. This Mycobacteroides abscessus (strain ATCC 19977 / DSM 44196 / CCUG 20993 / CIP 104536 / JCM 13569 / NCTC 13031 / TMC 1543 / L948) (Mycobacterium abscessus) protein is Heat-inducible transcription repressor HrcA.